Consider the following 477-residue polypeptide: Aspartyl/glutamyl-tRNA(Asn/Gln) amidotransferase subunit B (477 aa).

Belongs to the GatB/GatE family. GatB subfamily. In terms of assembly, heterotrimer of A, B and C subunits.

It carries out the reaction L-glutamyl-tRNA(Gln) + L-glutamine + ATP + H2O = L-glutaminyl-tRNA(Gln) + L-glutamate + ADP + phosphate + H(+). The enzyme catalyses L-aspartyl-tRNA(Asn) + L-glutamine + ATP + H2O = L-asparaginyl-tRNA(Asn) + L-glutamate + ADP + phosphate + 2 H(+). Allows the formation of correctly charged Asn-tRNA(Asn) or Gln-tRNA(Gln) through the transamidation of misacylated Asp-tRNA(Asn) or Glu-tRNA(Gln) in organisms which lack either or both of asparaginyl-tRNA or glutaminyl-tRNA synthetases. The reaction takes place in the presence of glutamine and ATP through an activated phospho-Asp-tRNA(Asn) or phospho-Glu-tRNA(Gln). The protein is Aspartyl/glutamyl-tRNA(Asn/Gln) amidotransferase subunit B of Coxiella burnetii (strain CbuK_Q154) (Coxiella burnetii (strain Q154)).